A 39-amino-acid polypeptide reads, in one-letter code: MTIDRTYPIFTVRWLAVHGLAVPTVFFLGSISAMQFIQR.

The helical transmembrane segment at 14–30 threads the bilayer; the sequence is WLAVHGLAVPTVFFLGS. Histidine 18 serves as a coordination point for heme.

Belongs to the PsbE/PsbF family. In terms of assembly, heterodimer of an alpha subunit and a beta subunit. PSII is composed of 1 copy each of membrane proteins PsbA, PsbB, PsbC, PsbD, PsbE, PsbF, PsbH, PsbI, PsbJ, PsbK, PsbL, PsbM, PsbT, PsbX, PsbY, PsbZ, Psb30/Ycf12, at least 3 peripheral proteins of the oxygen-evolving complex and a large number of cofactors. It forms dimeric complexes. The cofactor is heme b.

The protein localises to the plastid. The protein resides in the chloroplast thylakoid membrane. Its function is as follows. This b-type cytochrome is tightly associated with the reaction center of photosystem II (PSII). PSII is a light-driven water:plastoquinone oxidoreductase that uses light energy to abstract electrons from H(2)O, generating O(2) and a proton gradient subsequently used for ATP formation. It consists of a core antenna complex that captures photons, and an electron transfer chain that converts photonic excitation into a charge separation. The polypeptide is Cytochrome b559 subunit beta (Nicotiana glutinosa (Tobacco)).